The primary structure comprises 95 residues: Large ribosomal subunit protein eL43 (95 aa).

Residues 38-59 form a C4-type zinc finger; that stretch reads CPDCGSEAVSREGTGIWQCGKC.

The protein belongs to the eukaryotic ribosomal protein eL43 family. Requires Zn(2+) as cofactor.

The polypeptide is Large ribosomal subunit protein eL43 (Halobacterium salinarum (strain ATCC 29341 / DSM 671 / R1)).